The following is a 283-amino-acid chain: SNAP25 homologous protein SNAP32 (283 aa).

Disordered regions lie at residues methionine 1–arginine 64 and leucine 192–serine 212. Over residues proline 198–serine 212 the composition is skewed to polar residues. The t-SNARE coiled-coil homology domain occupies glutamate 218–leucine 280.

It belongs to the SNAP-25 family. In terms of assembly, interacts with SYP121. In terms of tissue distribution, expressed in roots, culms and leaves.

The protein localises to the membrane. In terms of biological role, t-SNARE involved in diverse vesicle trafficking and membrane fusion processes. May be involved in resistance to the rice blast fungus Magnaporthe oryzae. May contribute to host resistance to rice blast through interaction with SYP121. The protein is SNAP25 homologous protein SNAP32 of Oryza sativa subsp. japonica (Rice).